Reading from the N-terminus, the 140-residue chain is Pro-vaccinia growth factor (140 aa).

The signal sequence occupies residues 1–18 (MLINYLMLLFAAMIIRSF). The Extracellular portion of the chain corresponds to 19–100 (ADSGNAIETT…SEKPNTTTSY (82 aa)). Asparagine 34 is a glycosylation site (N-linked (GlcNAc...) asparagine; by host). Positions 41–81 (AIRLCGPEGDGYCLHGDCIHARDIDGMYCRCSHGYTGIRCQ) constitute an EGF-like domain. Cystine bridges form between cysteine 45/cysteine 58, cysteine 53/cysteine 69, and cysteine 71/cysteine 80. Asparagine 95 carries N-linked (GlcNAc...) asparagine; by host glycosylation. A helical transmembrane segment spans residues 101 to 121 (IPSPGIMLVLVGIIIITCCLL). Over 122 to 140 (SVYRFTRRTKLPIQDMVVP) the chain is Cytoplasmic.

It belongs to the orthopoxvirus OPG019 family. Interacts with host EGFR.

It is found in the host membrane. It localises to the secreted. Stimulates cellular proliferation (hyperplasia)and mobility around infected cells to promote rapid and efficient spread of infection. This effect is beneficial for virus replication in vivo, because poxviruses replicate possibly better in proliferating cells than in quiescent cells. Acts by binding host EGFR, inducing its dimerization, autophosphorylation and leading to activation of several cellular pathways regulating cell proliferation or cell survival. The activation by host EGFR of mitogen activated protein kinases (MAPK) and extracellular-signal regulated kinases (ERK) are essential for the positive effect of vaccinia growth factor on poxvirus virulence in vivo. In Homo sapiens (Human), this protein is Pro-vaccinia growth factor (OPG019).